The following is a 301-amino-acid chain: Acetyl-coenzyme A carboxylase carboxyl transferase subunit beta (301 aa).

Positions 23–292 (VWTKCDSCGQ…PSPDEPRESV (270 aa)) constitute a CoA carboxyltransferase N-terminal domain. Residues Cys27, Cys30, Cys46, and Cys49 each contribute to the Zn(2+) site. The C4-type zinc finger occupies 27 to 49 (CDSCGQVLYRAELERNLEVCPKC). A disordered region spans residues 280 to 301 (LPAPSPDEPRESVVVPDQEPEA).

This sequence belongs to the AccD/PCCB family. In terms of assembly, acetyl-CoA carboxylase is a heterohexamer composed of biotin carboxyl carrier protein (AccB), biotin carboxylase (AccC) and two subunits each of ACCase subunit alpha (AccA) and ACCase subunit beta (AccD). It depends on Zn(2+) as a cofactor.

It localises to the cytoplasm. The enzyme catalyses N(6)-carboxybiotinyl-L-lysyl-[protein] + acetyl-CoA = N(6)-biotinyl-L-lysyl-[protein] + malonyl-CoA. It participates in lipid metabolism; malonyl-CoA biosynthesis; malonyl-CoA from acetyl-CoA: step 1/1. Its function is as follows. Component of the acetyl coenzyme A carboxylase (ACC) complex. Biotin carboxylase (BC) catalyzes the carboxylation of biotin on its carrier protein (BCCP) and then the CO(2) group is transferred by the transcarboxylase to acetyl-CoA to form malonyl-CoA. The sequence is that of Acetyl-coenzyme A carboxylase carboxyl transferase subunit beta from Enterobacter sp. (strain 638).